A 901-amino-acid chain; its full sequence is MLIPSKLSRPVRLDHTVVRERLLAKLSGANNFRLLLVTSPAGYGKTTLVSQWAAGKNELGWYSLDEGDNQQERFASYLIAAIQQATGGHCSTSEAMAQKRQYASLTSLFAQLFIELAQWHRPLYLVIDDYHLITNPVIHDAMRFFLRHQPENFTLVVLSRNLPQLGIANLRVRDQLLEIGSQQLAFNHQEAKQFFDRRLSSPIEAAESSRMCDDVAGWATALQLIALSARQNHTSAHHSARRLAGINASHLSDYLVDEVLDNVDVSTRHFLLKSAILRSMNDALIVRVTGEENGQMRLEEIERQGLFLQRMDDTGEWFSYHPLFGSFLRQRCQWELAAELPEIHRAAAESWMEQGFPSEAIHHALAAGDAQMLRDILLNHAWGLFNHSELALLEESLKALPWESLLENPRLVLLQAWLMQSQHRYSEVNTLLARAEQEIKGVMDGTLHAEFNALRAQVAINDGNPEEAERLAKLALDELPLAWFYSRIVATSVHGEVLHCKGNLSQSLSLMQQTEQMARHHDVWHYALWSLIQQSEIQFAQGFLQAAWETQERAFQLIKEQHLEQLPMHEFLVRIRAQLLWAWARLDEAEASARSGIAVLSTFQPQQQLQCLTLLVQCSLARGDLDNARSQLNRLEKLLGNGRYHCDWISNADKVRVIYWQLTGDKKSAANWLRHTPKPAFANNHFLQGQWRNIARAQILLGEFEPAEIVLEELNENARSLRLMSDLNRNLLLLNQLYWQSGRKNDAQRVLLDALQLANRTGFISHFVIEGEAMAQQLRQLIQLNTLPEMEQHRAQRILRYINQHHRHKFAHFDEGFVERLLNHPDVPELIRTSPLTQREWQVLGLIYSGYSNEQIAGELAVAATTIKTHIRNLYQKLGVAHRQDAVQHAQQLLKMMGYGV.

Residue 39–46 (SPAGYGKT) coordinates ATP. The 66-residue stretch at 829–894 (ELIRTSPLTQ…DAVQHAQQLL (66 aa)) folds into the HTH luxR-type domain. A DNA-binding region (H-T-H motif) is located at residues 853 to 872 (NEQIAGELAVAATTIKTHIR).

The protein belongs to the MalT family. Monomer in solution. Oligomerizes to an active state in the presence of the positive effectors ATP and maltotriose.

With respect to regulation, activated by ATP and maltotriose, which are both required for DNA binding. Its function is as follows. Positively regulates the transcription of the maltose regulon whose gene products are responsible for uptake and catabolism of malto-oligosaccharides. Specifically binds to the promoter region of its target genes, recognizing a short DNA motif called the MalT box. The protein is HTH-type transcriptional regulator MalT of Salmonella typhi.